The following is an 85-amino-acid chain: Insecticidal toxin Vn1 (85 aa).

The first 23 residues, 1 to 23 (MFLYRLICLFILICIITVDISTS), serve as a signal peptide directing secretion. A disulfide bridge links C71 with C84.

As to expression, highly expressed in the venom apparatus, and weakly expressed in residual body.

Its subcellular location is the secreted. Its function is as follows. Endoparasitoid venom toxin that exhibits insecticidal activity against Tenebrio molitor pupae. Impacts genes related to immune response, environmental information processing, metabolism, and response to external stimuli in T.molitor, suggesting its involvement in the intricate parasitoid wasp-host interaction. In Aphidius gifuensis (Parasitoid wasp), this protein is Insecticidal toxin Vn1.